Here is a 184-residue protein sequence, read N- to C-terminus: J-type co-chaperone JAC1, mitochondrial (184 aa).

A mitochondrion-targeting transit peptide spans Met1–Phe10. A J domain is found at Thr13–Leu82. Residues His48–Asp50 carry the HSP70 binding motif. Residues Asp71–His184 are interaction with ISU1.

This sequence belongs to the HscB family. In terms of assembly, interacts with ISU1 and SSQ1.

It localises to the mitochondrion matrix. Its function is as follows. Co-chaperone required for the assembly of iron-sulfur (Fe/S) clusters in mitochondria. Stimulates the ATPase activity of its specialized Hsp70 chaperone partner SSQ1, to mediate the transfer of iron-sulfur clusters from ISU1 to GRX5. Binds to the substrate protein ISU1 and targets it to SSQ1. The sequence is that of J-type co-chaperone JAC1, mitochondrial from Saccharomyces cerevisiae (strain ATCC 204508 / S288c) (Baker's yeast).